An 894-amino-acid polypeptide reads, in one-letter code: Cell wall-associated protease (894 aa).

The signal sequence occupies residues 1-31 (MKRRKFSSVVAAVLIFALIFSLFSPGTKAAA). The region spanning 422 to 729 (QWPLKNNGEN…YGRLNVMKAV (308 aa)) is the Peptidase S8 domain. Residues Asp-462, His-497, and Ser-650 each act as charge relay system in the active site.

This sequence belongs to the peptidase S8 family. Post-translationally, proteolytically cleaved to yield CWBP23 and CWBP52.

Its subcellular location is the secreted. It is found in the cell wall. Inhibited by PMSF. Its function is as follows. CWBP52 is a serine-type protease that could be involved in proteoglycan peptide bridges. This chain is Cell wall-associated protease (wprA), found in Bacillus subtilis (strain 168).